A 796-amino-acid chain; its full sequence is Pathogenesis-related homeodomain protein (796 aa).

Disordered regions lie at residues 34–57 (KKGK…EELC) and 80–99 (VKKT…KVEV). Basic residues predominate over residues 81 to 90 (KKTRKRKSKR). A PHD-type zinc finger spans residues 190-247 (HIFCAECNSREAFPDNDIILCDGTCNRAFHQKCLDPPLETESIPPGDQGWFCKFCDCK). Disordered stretches follow at residues 282–347 (SEAT…STGS), 393–422 (LQEQ…STLV), and 511–736 (NRKT…TEEE). Positions 292–303 (WPSDDSKDDDYD) are enriched in acidic residues. Positions 452–511 (GGRRRMFRLPRNAVEKLRQVFAETELPSKAVRDRLAKELSLDPEKVNKWFKNTRYMALRN) form a DNA-binding region, homeobox. Composition is skewed to polar residues over residues 538-547 (ENNTETNEVQ) and 560-569 (ATNQNILSPC). Low complexity predominate over residues 570–580 (NNNQEEFQQEN). A compositionally biased stretch (polar residues) spans 581–600 (VSFPSPTDESQQYLEQNDSS). 4 consecutive repeat copies span residues 605–631 (PHEK…MMKE), 632–658 (PHEE…MIEE), 659–685 (PHEE…MMEE), and 686–712 (PHDE…MTEE). Residues 605–735 (PHEKQSSEIS…KETGRKMTEE (131 aa)) form a 5 X 27 AA tandem repeats region. 3 stretches are compositionally biased toward basic and acidic residues: residues 624–636 (TESK…HEEL), 645–690 (AAEE…HDEL), and 700–733 (VEEK…RKMT). Residues 713 to 735 (SHEELSNEMSLEEKETGRKMTEE) form a 5; truncated repeat. Residues 738-759 (LEAVMEMLCRTENKLLDVTQRL) are leucine-zipper.

The protein belongs to the PHD-associated homeobox family.

It is found in the nucleus. Specifically binds to the fungal elicitor-responsive DNA element, 5'-CTAATTGTTTA-3', of the gene PR2 promoter. The polypeptide is Pathogenesis-related homeodomain protein (PRH) (Arabidopsis thaliana (Mouse-ear cress)).